The chain runs to 120 residues: Large ribosomal subunit protein uL18 (120 aa).

It belongs to the universal ribosomal protein uL18 family. In terms of assembly, part of the 50S ribosomal subunit; part of the 5S rRNA/L5/L18/L25 subcomplex. Contacts the 5S and 23S rRNAs.

In terms of biological role, this is one of the proteins that bind and probably mediate the attachment of the 5S RNA into the large ribosomal subunit, where it forms part of the central protuberance. This is Large ribosomal subunit protein uL18 from Bartonella quintana (strain Toulouse) (Rochalimaea quintana).